Reading from the N-terminus, the 827-residue chain is Centrosomal protein of 95 kDa (827 aa).

5 disordered regions span residues 115 to 145 (ISESSPNKSETEQYSKDSHGEEAGEDLERTE), 183 to 249 (GDTA…MVPS), 308 to 372 (FLTS…MSEK), 388 to 476 (LGDR…DSCH), and 489 to 558 (ELRK…KASP). Residues 123–145 (SETEQYSKDSHGEEAGEDLERTE) are compositionally biased toward basic and acidic residues. Positions 187–199 (HTFSQRSNGAQNS) are enriched in polar residues. 2 stretches are compositionally biased toward basic and acidic residues: residues 327 to 343 (EATRTRKPSKGERDENR) and 360 to 372 (PLTEQELHAMSEK). Phosphoserine occurs at positions 447, 449, and 451. Coiled coils occupy residues 584–633 (LTKM…VKKE) and 701–795 (LQIQ…DDDA).

The protein resides in the cytoplasm. It localises to the cytoskeleton. Its subcellular location is the microtubule organizing center. It is found in the centrosome. The protein localises to the spindle pole. The protein is Centrosomal protein of 95 kDa (Cep95) of Mus musculus (Mouse).